The chain runs to 564 residues: MFS-type efflux pump LUC4 (564 aa).

Polar residues predominate over residues 1 to 15 (MGQSQDNTQLTTASP). Positions 1–35 (MGQSQDNTQLTTASPQAEKDLSSNDNPPESEPAAP) are disordered. The next 5 helical transmembrane spans lie at 42 to 62 (WLVFIAIALTTFLAALDTSII), 78 to 98 (LYVWIVDSYLLASTATIPIFA), 108 to 128 (SLTLIAVCLFTLGSGLCGGAH), 141 to 161 (GVGGGGILTMSEIVVCDMVSV), and 170 to 190 (IIGGVWAIASVIAPIMGGAFA). A glycan (N-linked (GlcNAc...) asparagine) is linked at asparagine 192. 3 consecutive transmembrane segments (helical) span residues 197-217 (WIFYINLPIAGVVLVALIVFL), 236-256 (WGGSVLLIASVTAVVLALSWG), and 268-288 (LVPLILGLVGQLAFFAYQGAP). N-linked (GlcNAc...) asparagine glycosylation occurs at asparagine 302. 5 consecutive transmembrane segments (helical) span residues 308 to 328 (LFVISFVHSMLLFWVCYFLPV), 343 to 363 (VMLFPIATTSAPGGVIAGIFI), 371 to 391 (VWHFVGFALMSISCGLFTLLD), 404 to 424 (LLFGFGTGFVFTSCLPPILAS), and 436 to 456 (AWTFLRNFGSIWGIAIPAAAF). An N-linked (GlcNAc...) asparagine glycan is attached at asparagine 461. The helical transmembrane segment at 512 to 532 (KLVWQVSIAFSVLGFVLAFLV) threads the bilayer.

It belongs to the major facilitator superfamily. TCR/Tet family.

The protein resides in the membrane. Functionally, MFS-type efflux pump; part of the gene cluster that mediates the biosynthesis of the mycotoxin lucilactaene and the lucilactaene-related compound NG-391 that act as cell cycle inhibitors with potent growth inhibitory activity against malarial parasites, moderate growth inhibitory activity against cancer cells, and no activity against bacteria and fungi. This Fusarium sp protein is MFS-type efflux pump LUC4.